A 459-amino-acid chain; its full sequence is Bifunctional protein GlmU (459 aa).

The segment at 1-229 (MSNFAIILAA…FDESLGVNDR (229 aa)) is pyrophosphorylase. UDP-N-acetyl-alpha-D-glucosamine is bound by residues 8 to 11 (LAAG), K22, Q72, and 77 to 78 (GT). D102 contacts Mg(2+). UDP-N-acetyl-alpha-D-glucosamine-binding residues include G139, E154, N169, and N227. N227 lines the Mg(2+) pocket. Residues 230 to 250 (VALATAESVMRRRINHKHMVN) are linker. The interval 251 to 459 (GVSFVNPEAT…TRLPHHPKNQ (209 aa)) is N-acetyltransferase. Residues R332 and K350 each contribute to the UDP-N-acetyl-alpha-D-glucosamine site. Residue H362 is the Proton acceptor of the active site. 2 residues coordinate UDP-N-acetyl-alpha-D-glucosamine: Y365 and N376. Acetyl-CoA contacts are provided by residues A379, 385-386 (NY), S404, A422, and R439.

This sequence in the N-terminal section; belongs to the N-acetylglucosamine-1-phosphate uridyltransferase family. It in the C-terminal section; belongs to the transferase hexapeptide repeat family. In terms of assembly, homotrimer. It depends on Mg(2+) as a cofactor.

It localises to the cytoplasm. The enzyme catalyses alpha-D-glucosamine 1-phosphate + acetyl-CoA = N-acetyl-alpha-D-glucosamine 1-phosphate + CoA + H(+). It carries out the reaction N-acetyl-alpha-D-glucosamine 1-phosphate + UTP + H(+) = UDP-N-acetyl-alpha-D-glucosamine + diphosphate. The protein operates within nucleotide-sugar biosynthesis; UDP-N-acetyl-alpha-D-glucosamine biosynthesis; N-acetyl-alpha-D-glucosamine 1-phosphate from alpha-D-glucosamine 6-phosphate (route II): step 2/2. It participates in nucleotide-sugar biosynthesis; UDP-N-acetyl-alpha-D-glucosamine biosynthesis; UDP-N-acetyl-alpha-D-glucosamine from N-acetyl-alpha-D-glucosamine 1-phosphate: step 1/1. Its pathway is bacterial outer membrane biogenesis; LPS lipid A biosynthesis. Catalyzes the last two sequential reactions in the de novo biosynthetic pathway for UDP-N-acetylglucosamine (UDP-GlcNAc). The C-terminal domain catalyzes the transfer of acetyl group from acetyl coenzyme A to glucosamine-1-phosphate (GlcN-1-P) to produce N-acetylglucosamine-1-phosphate (GlcNAc-1-P), which is converted into UDP-GlcNAc by the transfer of uridine 5-monophosphate (from uridine 5-triphosphate), a reaction catalyzed by the N-terminal domain. In Streptococcus pneumoniae (strain JJA), this protein is Bifunctional protein GlmU.